A 225-amino-acid polypeptide reads, in one-letter code: PKHD-type hydroxylase YbiX (225 aa).

The Fe2OG dioxygenase domain maps to 78-177; that stretch reads TLSTPLFNRY…RVASFMWIQS (100 aa). Fe cation is bound by residues H96, D98, and H158. R168 is a 2-oxoglutarate binding site.

It depends on Fe(2+) as a cofactor. L-ascorbate is required as a cofactor.

This chain is PKHD-type hydroxylase YbiX, found in Escherichia coli O6:H1 (strain CFT073 / ATCC 700928 / UPEC).